A 365-amino-acid chain; its full sequence is MDNYEFSELLKTLKNKVGNIASIIKPENIQTRLKEIEELENSPSFWSDVKQAGIIGKEKTKITNLLKNYENAFNALNDASELFDLANSENDTETLEALFNDAPKLEDTITSLEISMLLSGENDGKNAIVSIHPGAGGTESNDWASILYRMYLRFCEREGFKVETLDFQEGEEAGLKDVSFLVKGENAYGYLKAENGIHRLVRTSPFDSAGRRHTSFSSVMVSPELDDDIEIEIEEKDIRIDYYRASGAGGQHVNKTESAVRITHFPTGIVVQCQNDRSQHKNKATAFKMLKSRLYELELMKQQDSANTGEKSEIGWGHQIRSYVLFPYQQVKDNRSGEAFSQVDNILDGDIKKMIEGVLIALKAE.

An N5-methylglutamine modification is found at Q251.

Belongs to the prokaryotic/mitochondrial release factor family. Methylated by PrmC. Methylation increases the termination efficiency of RF2.

The protein localises to the cytoplasm. In terms of biological role, peptide chain release factor 2 directs the termination of translation in response to the peptide chain termination codons UGA and UAA. The protein is Peptide chain release factor 2 of Campylobacter jejuni subsp. jejuni serotype O:2 (strain ATCC 700819 / NCTC 11168).